We begin with the raw amino-acid sequence, 474 residues long: tRNA-2-methylthio-N(6)-dimethylallyladenosine synthase (474 aa).

Positions 3 to 120 (QKLHIKTWGC…LPEMINQIRG (118 aa)) constitute an MTTase N-terminal domain. [4Fe-4S] cluster contacts are provided by Cys-12, Cys-49, Cys-83, Cys-157, Cys-161, and Cys-164. The 233-residue stretch at 143–375 (RAEGPTAFVS…QQRINNQAAQ (233 aa)) folds into the Radical SAM core domain. Residues 378-441 (RAMLGTEQRV…TNSLRGEVVR (64 aa)) enclose the TRAM domain.

It belongs to the methylthiotransferase family. MiaB subfamily. As to quaternary structure, monomer. It depends on [4Fe-4S] cluster as a cofactor.

It is found in the cytoplasm. The enzyme catalyses N(6)-dimethylallyladenosine(37) in tRNA + (sulfur carrier)-SH + AH2 + 2 S-adenosyl-L-methionine = 2-methylsulfanyl-N(6)-dimethylallyladenosine(37) in tRNA + (sulfur carrier)-H + 5'-deoxyadenosine + L-methionine + A + S-adenosyl-L-homocysteine + 2 H(+). Functionally, catalyzes the methylthiolation of N6-(dimethylallyl)adenosine (i(6)A), leading to the formation of 2-methylthio-N6-(dimethylallyl)adenosine (ms(2)i(6)A) at position 37 in tRNAs that read codons beginning with uridine. The chain is tRNA-2-methylthio-N(6)-dimethylallyladenosine synthase from Histophilus somni (strain 129Pt) (Haemophilus somnus).